The sequence spans 341 residues: Phenylalanine--tRNA ligase alpha subunit (341 aa).

Glu-254 serves as a coordination point for Mg(2+).

This sequence belongs to the class-II aminoacyl-tRNA synthetase family. Phe-tRNA synthetase alpha subunit type 1 subfamily. In terms of assembly, tetramer of two alpha and two beta subunits. The cofactor is Mg(2+).

The protein resides in the cytoplasm. The enzyme catalyses tRNA(Phe) + L-phenylalanine + ATP = L-phenylalanyl-tRNA(Phe) + AMP + diphosphate + H(+). The protein is Phenylalanine--tRNA ligase alpha subunit of Chlorobaculum parvum (strain DSM 263 / NCIMB 8327) (Chlorobium vibrioforme subsp. thiosulfatophilum).